The chain runs to 350 residues: Uroporphyrinogen decarboxylase (350 aa).

Substrate-binding positions include 28–32, Phe47, Asp78, Tyr155, Ser210, and His325; that span reads RQAGR.

The protein belongs to the uroporphyrinogen decarboxylase family. In terms of assembly, homodimer.

The protein resides in the cytoplasm. It carries out the reaction uroporphyrinogen III + 4 H(+) = coproporphyrinogen III + 4 CO2. It participates in porphyrin-containing compound metabolism; protoporphyrin-IX biosynthesis; coproporphyrinogen-III from 5-aminolevulinate: step 4/4. Functionally, catalyzes the decarboxylation of four acetate groups of uroporphyrinogen-III to yield coproporphyrinogen-III. In Synechocystis sp. (strain ATCC 27184 / PCC 6803 / Kazusa), this protein is Uroporphyrinogen decarboxylase.